A 262-amino-acid polypeptide reads, in one-letter code: Adenosylcobinamide-GDP ribazoletransferase (262 aa).

6 consecutive transmembrane segments (helical) span residues 43 to 63 (YFGL…WLTQ), 66 to 86 (LPAG…TGGF), 120 to 140 (GALA…ELAL), 146 to 166 (AGSA…SIIF), 191 to 211 (LLIL…LAAL), and 242 to 262 (AAQQ…GNIL).

This sequence belongs to the CobS family. Requires Mg(2+) as cofactor.

The protein resides in the cell inner membrane. It carries out the reaction alpha-ribazole + adenosylcob(III)inamide-GDP = adenosylcob(III)alamin + GMP + H(+). It catalyses the reaction alpha-ribazole 5'-phosphate + adenosylcob(III)inamide-GDP = adenosylcob(III)alamin 5'-phosphate + GMP + H(+). Its pathway is cofactor biosynthesis; adenosylcobalamin biosynthesis; adenosylcobalamin from cob(II)yrinate a,c-diamide: step 7/7. Joins adenosylcobinamide-GDP and alpha-ribazole to generate adenosylcobalamin (Ado-cobalamin). Also synthesizes adenosylcobalamin 5'-phosphate from adenosylcobinamide-GDP and alpha-ribazole 5'-phosphate. This is Adenosylcobinamide-GDP ribazoletransferase from Shewanella baltica (strain OS155 / ATCC BAA-1091).